A 132-amino-acid polypeptide reads, in one-letter code: MAAGMKGKRSRRRKERKNVEHGCAHIKSTFNNSIVTITDSVGNTLSWASAGGLGFRGSRKSTPFAAQMAAETAAKTAMEHGLKSIEVYVKGPGSGREAAIRSLQAAGLEVTLIKDVTPIPHNGCRPPKRRRV.

The segment covering 1–16 has biased composition (basic residues); sequence MAAGMKGKRSRRRKER. Residues 1 to 20 are disordered; it reads MAAGMKGKRSRRRKERKNVE.

This sequence belongs to the universal ribosomal protein uS11 family. As to quaternary structure, part of the 30S ribosomal subunit. Interacts with proteins S7 and S18. Binds to IF-3.

Located on the platform of the 30S subunit, it bridges several disparate RNA helices of the 16S rRNA. Forms part of the Shine-Dalgarno cleft in the 70S ribosome. The protein is Small ribosomal subunit protein uS11 of Clostridium botulinum (strain Loch Maree / Type A3).